The chain runs to 168 residues: N-alpha-acetyltransferase (168 aa).

The N-acetyltransferase domain occupies 13 to 168 (YQIRLATLSD…EDAYLMAAPL (156 aa)). Y38 contributes to the substrate binding site. H89 is a binding site for Zn(2+). Acetyl-CoA-binding positions include 93 to 95 (IAV) and 101 to 106 (KIGVGT). Residues 93 to 95 (IAV) and 101 to 106 (KIGVGT) each bind CoA. E128 contacts Zn(2+). Residues N133 and 140–142 (YKK) contribute to the acetyl-CoA site. N133 lines the CoA pocket. Y155 serves as a coordination point for substrate.

This sequence belongs to the acetyltransferase family. ARD1 subfamily. As to quaternary structure, homodimer.

The protein resides in the cytoplasm. The enzyme catalyses N-terminal L-alanyl-[protein] + acetyl-CoA = N-terminal N(alpha)-acetyl-L-alanyl-[protein] + CoA + H(+). It carries out the reaction N-terminal L-seryl-[protein] + acetyl-CoA = N-terminal N(alpha)-acetyl-L-seryl-[protein] + CoA + H(+). It catalyses the reaction N-terminal L-methionyl-L-leucyl-[protein] + acetyl-CoA = N-terminal N(alpha)-acetyl-L-methionyl-L-leucyl-[protein] + CoA + H(+). The catalysed reaction is N-terminal L-methionyl-L-glutamyl-[protein] + acetyl-CoA = N-terminal N(alpha)-acetyl-L-methionyl-L-glutamyl-[protein] + CoA + H(+). Displays alpha (N-terminal) acetyltransferase activity. Catalyzes the covalent attachment of an acetyl moiety from acetyl-CoA to the free alpha-amino group at the N-terminus of a protein. The chain is N-alpha-acetyltransferase from Sulfolobus acidocaldarius (strain ATCC 33909 / DSM 639 / JCM 8929 / NBRC 15157 / NCIMB 11770).